The chain runs to 408 residues: 3-hydroxy-3-methylglutaryl-coenzyme A reductase (408 aa).

Catalysis depends on charge relay system residues Glu-101 and Asp-307. The active-site Proton donor is His-403.

It belongs to the HMG-CoA reductase family.

It catalyses the reaction (R)-mevalonate + 2 NADP(+) + CoA = (3S)-3-hydroxy-3-methylglutaryl-CoA + 2 NADPH + 2 H(+). It participates in metabolic intermediate biosynthesis; (R)-mevalonate biosynthesis; (R)-mevalonate from acetyl-CoA: step 3/3. Its function is as follows. Converts HMG-CoA to mevalonate. The chain is 3-hydroxy-3-methylglutaryl-coenzyme A reductase (hmgA) from Pyrococcus abyssi (strain GE5 / Orsay).